The primary structure comprises 221 residues: Phosphoribosylformylglycinamidine synthase subunit PurQ (221 aa).

Residues 5-221 (TVGIVVFPGS…LYTLRSLITQ (217 aa)) enclose the Glutamine amidotransferase type-1 domain. Catalysis depends on C89, which acts as the Nucleophile. Active-site residues include H197 and E199.

As to quaternary structure, part of the FGAM synthase complex composed of 1 PurL, 1 PurQ and 2 PurS subunits.

It is found in the cytoplasm. The enzyme catalyses N(2)-formyl-N(1)-(5-phospho-beta-D-ribosyl)glycinamide + L-glutamine + ATP + H2O = 2-formamido-N(1)-(5-O-phospho-beta-D-ribosyl)acetamidine + L-glutamate + ADP + phosphate + H(+). The catalysed reaction is L-glutamine + H2O = L-glutamate + NH4(+). Its pathway is purine metabolism; IMP biosynthesis via de novo pathway; 5-amino-1-(5-phospho-D-ribosyl)imidazole from N(2)-formyl-N(1)-(5-phospho-D-ribosyl)glycinamide: step 1/2. In terms of biological role, part of the phosphoribosylformylglycinamidine synthase complex involved in the purines biosynthetic pathway. Catalyzes the ATP-dependent conversion of formylglycinamide ribonucleotide (FGAR) and glutamine to yield formylglycinamidine ribonucleotide (FGAM) and glutamate. The FGAM synthase complex is composed of three subunits. PurQ produces an ammonia molecule by converting glutamine to glutamate. PurL transfers the ammonia molecule to FGAR to form FGAM in an ATP-dependent manner. PurS interacts with PurQ and PurL and is thought to assist in the transfer of the ammonia molecule from PurQ to PurL. This Prochlorococcus marinus subsp. pastoris (strain CCMP1986 / NIES-2087 / MED4) protein is Phosphoribosylformylglycinamidine synthase subunit PurQ.